Here is a 286-residue protein sequence, read N- to C-terminus: Bifunctional protein FolD (286 aa).

NADP(+)-binding positions include 163-165 (GMS), Ile-188, and Ile-229.

This sequence belongs to the tetrahydrofolate dehydrogenase/cyclohydrolase family. In terms of assembly, homodimer.

The catalysed reaction is (6R)-5,10-methylene-5,6,7,8-tetrahydrofolate + NADP(+) = (6R)-5,10-methenyltetrahydrofolate + NADPH. The enzyme catalyses (6R)-5,10-methenyltetrahydrofolate + H2O = (6R)-10-formyltetrahydrofolate + H(+). It functions in the pathway one-carbon metabolism; tetrahydrofolate interconversion. Catalyzes the oxidation of 5,10-methylenetetrahydrofolate to 5,10-methenyltetrahydrofolate and then the hydrolysis of 5,10-methenyltetrahydrofolate to 10-formyltetrahydrofolate. This chain is Bifunctional protein FolD, found in Helicobacter hepaticus (strain ATCC 51449 / 3B1).